The sequence spans 310 residues: Aspartate carbamoyltransferase catalytic subunit (310 aa).

Residues Arg-55 and Thr-56 each coordinate carbamoyl phosphate. L-aspartate is bound at residue Lys-83. Residues Arg-105, His-136, and Gln-139 each contribute to the carbamoyl phosphate site. Residues Arg-169 and Arg-223 each coordinate L-aspartate. Carbamoyl phosphate is bound by residues Gly-264 and Pro-265.

Belongs to the aspartate/ornithine carbamoyltransferase superfamily. ATCase family. In terms of assembly, heterododecamer (2C3:3R2) of six catalytic PyrB chains organized as two trimers (C3), and six regulatory PyrI chains organized as three dimers (R2).

It carries out the reaction carbamoyl phosphate + L-aspartate = N-carbamoyl-L-aspartate + phosphate + H(+). It participates in pyrimidine metabolism; UMP biosynthesis via de novo pathway; (S)-dihydroorotate from bicarbonate: step 2/3. Catalyzes the condensation of carbamoyl phosphate and aspartate to form carbamoyl aspartate and inorganic phosphate, the committed step in the de novo pyrimidine nucleotide biosynthesis pathway. This is Aspartate carbamoyltransferase catalytic subunit from Saccharopolyspora erythraea (strain ATCC 11635 / DSM 40517 / JCM 4748 / NBRC 13426 / NCIMB 8594 / NRRL 2338).